The primary structure comprises 180 residues: Der GTPase-activating protein YihI (180 aa).

The segment covering 1–10 (MKQPARTSQV) has biased composition (polar residues). Disordered regions lie at residues 1 to 102 (MKQP…PRLT) and 158 to 180 (DAED…RTPE). A compositionally biased stretch (basic and acidic residues) spans 21-32 (TREEINQEARDR). A compositionally biased stretch (polar residues) spans 45 to 54 (SRANPATVSQ). The span at 55–67 (KGDKSQSVKDPRI) shows a compositional bias: basic and acidic residues. A compositionally biased stretch (low complexity) spans 84–93 (PANPVKAAKP).

This sequence belongs to the YihI family. In terms of assembly, interacts with Der.

Its function is as follows. A GTPase-activating protein (GAP) that modifies Der/EngA GTPase function. May play a role in ribosome biogenesis. This is Der GTPase-activating protein YihI from Erwinia tasmaniensis (strain DSM 17950 / CFBP 7177 / CIP 109463 / NCPPB 4357 / Et1/99).